A 685-amino-acid polypeptide reads, in one-letter code: DNA-directed RNA polymerase subunit beta' (685 aa).

Cys69, Cys71, Cys87, and Cys90 together coordinate Zn(2+). Mg(2+) contacts are provided by Asp489, Asp491, and Asp493.

It belongs to the RNA polymerase beta' chain family. RpoC1 subfamily. In plastids the minimal PEP RNA polymerase catalytic core is composed of four subunits: alpha, beta, beta', and beta''. When a (nuclear-encoded) sigma factor is associated with the core the holoenzyme is formed, which can initiate transcription. It depends on Mg(2+) as a cofactor. The cofactor is Zn(2+).

Its subcellular location is the plastid. The protein localises to the chloroplast. The catalysed reaction is RNA(n) + a ribonucleoside 5'-triphosphate = RNA(n+1) + diphosphate. In terms of biological role, DNA-dependent RNA polymerase catalyzes the transcription of DNA into RNA using the four ribonucleoside triphosphates as substrates. The protein is DNA-directed RNA polymerase subunit beta' of Gossypium hirsutum (Upland cotton).